The chain runs to 280 residues: Equatorin (280 aa).

Residues 1–19 form the signal peptide; that stretch reads MDFILLIFLSGVFLPNIFS. Topologically, residues 20 to 183 are vesicular; the sequence is LQPTVEQDPG…LSELEEIKLK (164 aa). A disordered region spans residues 112–131; it reads ATASGEEDKRSEPSRKSSTP. The segment covering 117-126 has biased composition (basic and acidic residues); the sequence is EEDKRSEPSR. The N-linked (GlcNAc...) asparagine glycan is linked to N145. A helical transmembrane segment spans residues 184–204; sequence LMLGISLMTLILLIPLLIFCF. Over 205-280 the chain is Cytoplasmic; that stretch reads ATLYKLRHLR…AEVTEERISE (76 aa). Position 279 is a phosphoserine (S279).

Interacts with SNAP25. In terms of processing, highly N- and O-glycosylated; contains sialic acid. As to expression, highly expressed in testis and epididymis. Low expression in other tissues.

It is found in the cytoplasmic vesicle. The protein localises to the secretory vesicle. The protein resides in the acrosome membrane. Its subcellular location is the acrosome inner membrane. It localises to the acrosome outer membrane. Its function is as follows. Acrosomal membrane-anchored protein involved in the process of fertilization and in acrosome biogenesis. This Rattus norvegicus (Rat) protein is Equatorin (Eqtn).